A 598-amino-acid chain; its full sequence is Glutamyl-tRNA(Gln) amidotransferase subunit E (598 aa).

This sequence belongs to the GatB/GatE family. GatE subfamily. Heterodimer of GatD and GatE.

The catalysed reaction is L-glutamyl-tRNA(Gln) + L-glutamine + ATP + H2O = L-glutaminyl-tRNA(Gln) + L-glutamate + ADP + phosphate + H(+). In terms of biological role, allows the formation of correctly charged Gln-tRNA(Gln) through the transamidation of misacylated Glu-tRNA(Gln) in organisms which lack glutaminyl-tRNA synthetase. The reaction takes place in the presence of glutamine and ATP through an activated gamma-phospho-Glu-tRNA(Gln). The GatDE system is specific for glutamate and does not act on aspartate. The polypeptide is Glutamyl-tRNA(Gln) amidotransferase subunit E (Thermoplasma volcanium (strain ATCC 51530 / DSM 4299 / JCM 9571 / NBRC 15438 / GSS1)).